The primary structure comprises 473 residues: ATP synthase subunit beta (473 aa).

Glycine 158–threonine 165 is an ATP binding site.

It belongs to the ATPase alpha/beta chains family. As to quaternary structure, F-type ATPases have 2 components, CF(1) - the catalytic core - and CF(0) - the membrane proton channel. CF(1) has five subunits: alpha(3), beta(3), gamma(1), delta(1), epsilon(1). CF(0) has three main subunits: a(1), b(2) and c(9-12). The alpha and beta chains form an alternating ring which encloses part of the gamma chain. CF(1) is attached to CF(0) by a central stalk formed by the gamma and epsilon chains, while a peripheral stalk is formed by the delta and b chains.

The protein resides in the cell membrane. It carries out the reaction ATP + H2O + 4 H(+)(in) = ADP + phosphate + 5 H(+)(out). Produces ATP from ADP in the presence of a proton gradient across the membrane. The catalytic sites are hosted primarily by the beta subunits. The sequence is that of ATP synthase subunit beta from Priestia megaterium (strain ATCC 12872 / QMB1551) (Bacillus megaterium).